The primary structure comprises 911 residues: ATP-dependent DNA helicase Q-like 5 (911 aa).

Residues 1 to 84 (MDFDSDSDGS…PPPSPLFTNL (84 aa)) are disordered. Over residues 20–48 (SFPSSPPQLQSPAKHVPPVSRKMTSSSSR) the composition is skewed to low complexity. Pro residues predominate over residues 54 to 79 (PTHPPPNPSQEAPVPSPYPPPPPPSP). The Helicase ATP-binding domain occupies 278 to 448 (IKMILGGSST…MSSLEIPSTN (171 aa)). 291-298 (LPTGAGKS) is an ATP binding site. The DEAH box signature appears at 390–393 (DEAH). Positions 470–628 (RMKDLLILME…VFSTETKQHE (159 aa)) constitute a Helicase C-terminal domain.

This sequence belongs to the helicase family. RecQ subfamily. In terms of tissue distribution, mostly expressed in roots, seedlings, shoots, shoot apical mersitem, flowers, and siliques.

Its subcellular location is the nucleus. The catalysed reaction is Couples ATP hydrolysis with the unwinding of duplex DNA by translocating in the 3'-5' direction.. It catalyses the reaction ATP + H2O = ADP + phosphate + H(+). Functionally, 3'-5' DNA helicase that may play a role in the repair of DNA. This chain is ATP-dependent DNA helicase Q-like 5 (RECQL5), found in Arabidopsis thaliana (Mouse-ear cress).